The sequence spans 420 residues: UDP-N-acetylglucosamine 1-carboxyvinyltransferase (420 aa).

Residue 22–23 participates in phosphoenolpyruvate binding; that stretch reads KN. R92 serves as a coordination point for UDP-N-acetyl-alpha-D-glucosamine. C116 acts as the Proton donor in catalysis. C116 bears the 2-(S-cysteinyl)pyruvic acid O-phosphothioketal mark. UDP-N-acetyl-alpha-D-glucosamine is bound by residues 121–125, D307, and L329; that span reads RPIDL.

It belongs to the EPSP synthase family. MurA subfamily.

It localises to the cytoplasm. It catalyses the reaction phosphoenolpyruvate + UDP-N-acetyl-alpha-D-glucosamine = UDP-N-acetyl-3-O-(1-carboxyvinyl)-alpha-D-glucosamine + phosphate. It functions in the pathway cell wall biogenesis; peptidoglycan biosynthesis. Its function is as follows. Cell wall formation. Adds enolpyruvyl to UDP-N-acetylglucosamine. The protein is UDP-N-acetylglucosamine 1-carboxyvinyltransferase of Nitratiruptor sp. (strain SB155-2).